The following is a 712-amino-acid chain: Dipeptidyl-peptidase 7 (712 aa).

The signal sequence occupies residues 1-23 (MQMKLKSILLGAALLLGASGVAK). The active-site Charge relay system is histidine 89. A coiled-coil region spans residues 136-173 (TDKVEGQLKGITDEMERLRKAQEVCQELAKKENADENQ). Residues aspartate 225 and serine 648 each act as charge relay system in the active site.

Belongs to the peptidase S46 family.

It localises to the cell outer membrane. With respect to regulation, is inhibited in vitro by typical serine protease inhibitors like diisopropyl fluorophosphate, Pefablock, and 3,4-dichloroisocoumarin, but not by typical cysteine class inhibitors such as E-64 or iododoacetic acid. Its function is as follows. Catalyzes the removal of dipeptides from the N-terminus of oligopeptides. Shows a broad specificity for both aliphatic and aromatic residues in the P1 position, with glycine or proline being not acceptable in this position. Most potently cleaves the synthetic substrate Met-Leu-methylcoumaryl-7-amide (Met-Leu-MCA), Leu-Arg-MCA and Lys-Ala-MCA to a lesser extent. Is likely involved in amino acid metabolism and bacterial growth of asaccharolytic P.gingivalis, that utilizes amino acids from extracellular proteinaceous nutrients as energy and carbon sources. This Porphyromonas gingivalis (strain ATCC 33277 / DSM 20709 / CIP 103683 / JCM 12257 / NCTC 11834 / 2561) protein is Dipeptidyl-peptidase 7.